The primary structure comprises 344 residues: Uroporphyrinogen decarboxylase (344 aa).

Residues 26–30 (RQAGR), D75, Y150, S205, and H323 contribute to the substrate site.

The protein belongs to the uroporphyrinogen decarboxylase family. In terms of assembly, homodimer.

Its subcellular location is the cytoplasm. It catalyses the reaction uroporphyrinogen III + 4 H(+) = coproporphyrinogen III + 4 CO2. Its pathway is porphyrin-containing compound metabolism; protoporphyrin-IX biosynthesis; coproporphyrinogen-III from 5-aminolevulinate: step 4/4. Functionally, catalyzes the decarboxylation of four acetate groups of uroporphyrinogen-III to yield coproporphyrinogen-III. This Corynebacterium diphtheriae (strain ATCC 700971 / NCTC 13129 / Biotype gravis) protein is Uroporphyrinogen decarboxylase.